Here is a 490-residue protein sequence, read N- to C-terminus: ATP synthase subunit beta, chloroplastic (490 aa).

An ATP-binding site is contributed by 170-177; that stretch reads GGAGVGKT.

Belongs to the ATPase alpha/beta chains family. As to quaternary structure, F-type ATPases have 2 components, CF(1) - the catalytic core - and CF(0) - the membrane proton channel. CF(1) has five subunits: alpha(3), beta(3), gamma(1), delta(1), epsilon(1). CF(0) has four main subunits: a(1), b(1), b'(1) and c(9-12).

The protein resides in the plastid. The protein localises to the chloroplast thylakoid membrane. It carries out the reaction ATP + H2O + 4 H(+)(in) = ADP + phosphate + 5 H(+)(out). In terms of biological role, produces ATP from ADP in the presence of a proton gradient across the membrane. The catalytic sites are hosted primarily by the beta subunits. The polypeptide is ATP synthase subunit beta, chloroplastic (Ipomoea setosa (Brazilian morning glory)).